Here is a 507-residue protein sequence, read N- to C-terminus: RNA-binding protein MEX3B (507 aa).

The disordered stretch occupies residues 1–22 (MPSSLFADMERNGSGGGGGETL). KH domains follow at residues 59–120 (MTEC…RREI) and 155–216 (QTTI…REEI). Disordered regions lie at residues 256-279 (NQSSGSRKALSNYRNDSSSSLGSA) and 426-450 (SSSSSSSSSSSSSSSSSSSSSGMRR). Residues 426–446 (SSSSSSSSSSSSSSSSSSSSS) show a composition bias toward low complexity. The segment at 456-496 (CSICFESEVIAALVPCGHNLFCMECANRICEKNQPQCPVCH) adopts an RING-type zinc-finger fold.

It is found in the cytoplasm. It localises to the nucleus. The protein localises to the cytoplasmic granule. Its subcellular location is the P-body. In terms of biological role, RNA-binding protein. May be involved in post-transcriptional regulatory mechanisms. This Xenopus laevis (African clawed frog) protein is RNA-binding protein MEX3B (mex3b).